The chain runs to 101 residues: MAKKSAVNRNEAVKALVKKFAEKRAALKAIANDETLPLEERFEARLKLAKLPRNSAAIRIRNRCEVTGRPRAYYRKLKMSRVALRELGSQGQIPGLVKSSW.

It belongs to the universal ribosomal protein uS14 family. Part of the 30S ribosomal subunit. Contacts proteins S3 and S10.

Binds 16S rRNA, required for the assembly of 30S particles and may also be responsible for determining the conformation of the 16S rRNA at the A site. The polypeptide is Small ribosomal subunit protein uS14 (Caulobacter vibrioides (strain ATCC 19089 / CIP 103742 / CB 15) (Caulobacter crescentus)).